A 67-amino-acid chain; its full sequence is Large ribosomal subunit protein bL35 (67 aa).

Residues 1–32 (MPKLKNHSGAKKRFAKTATGKYKRRKAGRKHL) show a composition bias toward basic residues. Residues 1-54 (MPKLKNHSGAKKRFAKTATGKYKRRKAGRKHLLTPQSGSRKREMRQTGIIKPES) form a disordered region.

This sequence belongs to the bacterial ribosomal protein bL35 family.

The sequence is that of Large ribosomal subunit protein bL35 from Elusimicrobium minutum (strain Pei191).